The primary structure comprises 75 residues: UPF0512 protein C (75 aa).

The protein belongs to the UPF0512 family.

This chain is UPF0512 protein C, found in Dictyostelium discoideum (Social amoeba).